Consider the following 197-residue polypeptide: GTP cyclohydrolase-2 (197 aa).

Residue 49–53 participates in GTP binding; it reads RVHSE. 3 residues coordinate Zn(2+): C54, C65, and C67. GTP is bound by residues Q70, 92–94, and T114; that span reads EGR. The active-site Proton acceptor is D126. R128 (nucleophile) is an active-site residue. Residues T149 and K154 each contribute to the GTP site.

This sequence belongs to the GTP cyclohydrolase II family. As to quaternary structure, homodimer. The cofactor is Zn(2+).

It catalyses the reaction GTP + 4 H2O = 2,5-diamino-6-hydroxy-4-(5-phosphoribosylamino)-pyrimidine + formate + 2 phosphate + 3 H(+). Its pathway is cofactor biosynthesis; riboflavin biosynthesis; 5-amino-6-(D-ribitylamino)uracil from GTP: step 1/4. Its function is as follows. Catalyzes the conversion of GTP to 2,5-diamino-6-ribosylamino-4(3H)-pyrimidinone 5'-phosphate (DARP), formate and pyrophosphate. This is GTP cyclohydrolase-2 from Cronobacter sakazakii (strain ATCC BAA-894) (Enterobacter sakazakii).